We begin with the raw amino-acid sequence, 349 residues long: Merozoite surface protein P38 (349 aa).

The signal sequence occupies residues 1–21 (MKRWSIITGIVIIFCILTCKG). 6-Cys domains lie at 22–149 (QVEN…ISNG) and 153–301 (KIPG…YLTN). Intrachain disulfides connect cysteine 77–cysteine 127, cysteine 157–cysteine 183, cysteine 197–cysteine 278, and cysteine 208–cysteine 276. 3 N-linked (GlcNAc...) asparagine glycosylation sites follow: asparagine 294, asparagine 295, and asparagine 301. Asparagine 315 carries the GPI-anchor amidated asparagine lipid modification. The propeptide at 316-349 (SEIFERIEREEISFAFSSYLSITLILLYLFFLNF) is removed in mature form.

The protein localises to the cell surface. It localises to the cell membrane. The chain is Merozoite surface protein P38 (PFS38) from Plasmodium falciparum (isolate 3D7).